Here is a 372-residue protein sequence, read N- to C-terminus: 3,5-dihydroxyphenylacetyl-CoA synthase (372 aa).

Cys-160 is an active-site residue.

The protein belongs to the thiolase-like superfamily. Chalcone/stilbene synthases family.

It catalyses the reaction 4 malonyl-CoA + 4 H(+) = (3,5-dihydroxyphenyl)acetyl-CoA + 4 CO2 + 3 CoA + H2O. The protein operates within antibiotic biosynthesis. Involved in the biosynthesis of the nonproteinogenic amino acid monomer (S)-3,5-dihydroxyphenylglycine (Dpg) responsible of the production of balhimycin antibiotic. Catalyzes the Claisen condensation of four molecules of malonyl-CoA to yield 3,5-dihydroxyphenylacetyl-CoA (DPA-CoA) and three free coenzyme A (CoA). DpgA requires the presence of the dehydratases DpgB and DpgD to facilitate the aromatization of the DPA-S-DgpA or DPA-S-CoA intermediate. The sequence is that of 3,5-dihydroxyphenylacetyl-CoA synthase from Amycolatopsis balhimycina.